The following is a 399-amino-acid chain: MNLHEYQAKELLAKYGIGIPAGHAALTVEEAVAGAKQLPGPLYVVKAQIHAGGRGKGKFKELGPDAKGGVRLAKSIEDVEASAREMLGNTLVTVQTGEEGKQVNRLYVTDGVDIASEYYLSMVVDRASGRVGMIVSTEGGMDIEEVAHSTPEKITTITIDPAQGFMPHHGRAVAFALKLSGDLNKQAQKLAKQLYTAFMDLDCEMLEINPLVETEDGQLLVLDTKMSIDGNALYRHKDVEEMRDETEEDPAEVEASEYDLAYIKLDGNIGCMVNGAGLAMATMDIIKLNGAFPANFLDVGGGATTEKVTAAFKIILKDPAVEGILVNIFGGIMRCDTIAEGIVVAAKEVELDVPLVVRLEGTNVEKGKDILANSGLPIVPADDLGDAARKIVAEVKQAA.

One can recognise an ATP-grasp domain in the interval 9 to 254 (KELLAKYGIG…ETEEDPAEVE (246 aa)). Residues K46, 53-55 (GRG), V112, and E117 each bind ATP. 2 residues coordinate Mg(2+): N209 and D223. Residues N274 and 331–333 (GIM) each bind substrate.

Belongs to the succinate/malate CoA ligase beta subunit family. As to quaternary structure, heterotetramer of two alpha and two beta subunits. It depends on Mg(2+) as a cofactor.

The enzyme catalyses succinate + ATP + CoA = succinyl-CoA + ADP + phosphate. It carries out the reaction GTP + succinate + CoA = succinyl-CoA + GDP + phosphate. It functions in the pathway carbohydrate metabolism; tricarboxylic acid cycle; succinate from succinyl-CoA (ligase route): step 1/1. Functionally, succinyl-CoA synthetase functions in the citric acid cycle (TCA), coupling the hydrolysis of succinyl-CoA to the synthesis of either ATP or GTP and thus represents the only step of substrate-level phosphorylation in the TCA. The beta subunit provides nucleotide specificity of the enzyme and binds the substrate succinate, while the binding sites for coenzyme A and phosphate are found in the alpha subunit. This chain is Succinate--CoA ligase [ADP-forming] subunit beta, found in Erythrobacter litoralis (strain HTCC2594).